A 307-amino-acid polypeptide reads, in one-letter code: D-alanine--D-alanine ligase (307 aa).

Residues K108–E301 enclose the ATP-grasp domain. L135–T185 is an ATP binding site. D252, E268, and N270 together coordinate Mg(2+).

It belongs to the D-alanine--D-alanine ligase family. Mg(2+) serves as cofactor. Requires Mn(2+) as cofactor.

It is found in the cytoplasm. The enzyme catalyses 2 D-alanine + ATP = D-alanyl-D-alanine + ADP + phosphate + H(+). It participates in cell wall biogenesis; peptidoglycan biosynthesis. In terms of biological role, cell wall formation. The chain is D-alanine--D-alanine ligase from Cereibacter sphaeroides (strain ATCC 17029 / ATH 2.4.9) (Rhodobacter sphaeroides).